The following is a 1053-amino-acid chain: Zinc finger and BTB domain-containing protein 11 (1053 aa).

Residues 141–156 (LDLESGEESNESEDDL) show a composition bias toward acidic residues. Residues 141 to 173 (LDLESGEESNESEDDLSNFTSSPTTASKPAKKK) form a disordered region. Positions 157–168 (SNFTSSPTTASK) are enriched in low complexity. Positions 214-282 (CDVTLLIEGE…AYTSVLSFDF (69 aa)) constitute a BTB domain. Residues 546–566 (LVQRGKKMKQPKRDAKENTEE) are disordered. Residues 556 to 566 (PKRDAKENTEE) show a composition bias toward basic and acidic residues. C2H2-type zinc fingers lie at residues 569–591 (HKCG…KLKH) and 597–619 (YKCP…LIRH). The interval 619-643 (HTRKDAPSSSSSNSTSNEASGTSSE) is disordered. Positions 626–642 (SSSSSNSTSNEASGTSS) are enriched in low complexity. C2H2-type zinc fingers lie at residues 651–673 (FICS…MLKH), 679–701 (HACQ…QSLH), 707–729 (FQCE…MSIH), 735–757 (YLCS…FKKH), 766–788 (YHCT…MNKH), 794–816 (FQCQ…VKSH), 822–846 (YRCN…KATH), 858–880 (RVCE…MNNH), 886–908 (FECL…VRTH), and 914–937 (YVCP…TKFH). Residue Lys1043 forms a Glycyl lysine isopeptide (Lys-Gly) (interchain with G-Cter in SUMO2) linkage. Phosphoserine is present on Ser1050.

It localises to the nucleus. The protein localises to the nucleolus. In terms of biological role, may be involved in transcriptional regulation. This Homo sapiens (Human) protein is Zinc finger and BTB domain-containing protein 11.